Here is a 312-residue protein sequence, read N- to C-terminus: Homoserine O-acetyltransferase (312 aa).

Cys142 (acyl-thioester intermediate) is an active-site residue. Substrate-binding residues include Lys163 and Ser194. The active-site Proton acceptor is the His237. The active site involves Glu239. A substrate-binding site is contributed by Arg251.

Belongs to the MetA family.

Its subcellular location is the cytoplasm. It catalyses the reaction L-homoserine + acetyl-CoA = O-acetyl-L-homoserine + CoA. It functions in the pathway amino-acid biosynthesis; L-methionine biosynthesis via de novo pathway; O-acetyl-L-homoserine from L-homoserine: step 1/1. Functionally, transfers an acetyl group from acetyl-CoA to L-homoserine, forming acetyl-L-homoserine. In Catenibacterium mitsuokai (strain DSM 15897 / JCM 10609 / CCUG 48821 A / CIP 106738 / RCA14-39), this protein is Homoserine O-acetyltransferase.